Consider the following 179-residue polypeptide: NADH dehydrogenase [ubiquinone] 1 beta subcomplex subunit 9 (179 aa).

Position 2 is an N-acetylalanine (Ala-2). Position 85 is a phosphoserine (Ser-85). Residues 139 to 160 (QLQEETPVGGPRTEALPPARKQ) are disordered.

It belongs to the complex I LYR family. In terms of assembly, mammalian complex I is composed of 45 different subunits.

Its subcellular location is the mitochondrion inner membrane. Functionally, accessory subunit of the mitochondrial membrane respiratory chain NADH dehydrogenase (Complex I), that is believed to be not involved in catalysis. Complex I functions in the transfer of electrons from NADH to the respiratory chain. The immediate electron acceptor for the enzyme is believed to be ubiquinone. The protein is NADH dehydrogenase [ubiquinone] 1 beta subcomplex subunit 9 (NDUFB9) of Bos taurus (Bovine).